The primary structure comprises 182 residues: Troponin I, fast skeletal muscle (182 aa).

Gly2 carries the post-translational modification N-acetylglycine. The tract at residues 2-48 is involved in binding TNC; sequence GDEEKRNRAITARRQHLKSVMLQIAATELEKEESRRESEKQNYLSEH. At Thr12 the chain carries Phosphothreonine. A compositionally biased stretch (basic and acidic residues) spans 29-41; it reads ELEKEESRRESEK. A disordered region spans residues 29 to 53; it reads ELEKEESRRESEKQNYLSEHCPPLH. An involved in binding TNC and actin region spans residues 97 to 117; sequence NQKLFDLRGKFKRPPLRRVRM. Ser118 carries the phosphoserine modification.

This sequence belongs to the troponin I family. In terms of assembly, binds to actin and tropomyosin.

Its function is as follows. Troponin I is the inhibitory subunit of troponin, the thin filament regulatory complex which confers calcium-sensitivity to striated muscle actomyosin ATPase activity. The chain is Troponin I, fast skeletal muscle (Tnni2) from Rattus norvegicus (Rat).